We begin with the raw amino-acid sequence, 127 residues long: Translation initiation factor 5A (127 aa).

Lys-36 carries the post-translational modification Hypusine.

This sequence belongs to the eIF-5A family.

Its subcellular location is the cytoplasm. Its function is as follows. Functions by promoting the formation of the first peptide bond. The chain is Translation initiation factor 5A (eif5a) from Halobacterium salinarum (strain ATCC 700922 / JCM 11081 / NRC-1) (Halobacterium halobium).